Here is a 109-residue protein sequence, read N- to C-terminus: Staphostatin B (109 aa).

Positions 97-101 are binds to staphopain B; the sequence is IGTSR.

This sequence belongs to the protease inhibitor I57 (SspC) family. As to quaternary structure, forms a stable non-covalent complex with prematurely activated/folded SspB.

It localises to the cytoplasm. Specifically inhibits the cysteine protease staphopain B (SspB) by blocking the active site of the enzyme. Probably required to protect cytoplasmic proteins from being degraded by prematurely activated/folded prostaphopain B. Also involved in growth capacity, viability and bacterial morphology. The chain is Staphostatin B (sspC) from Staphylococcus aureus (strain Mu50 / ATCC 700699).